Here is a 160-residue protein sequence, read N- to C-terminus: Regulatory protein RecX (160 aa).

This sequence belongs to the RecX family.

It is found in the cytoplasm. Functionally, modulates RecA activity. The sequence is that of Regulatory protein RecX from Xanthomonas oryzae pv. oryzae (strain MAFF 311018).